Here is a 477-residue protein sequence, read N- to C-terminus: Ribulose bisphosphate carboxylase large chain (477 aa).

A propeptide spanning residues 1 to 2 (MS) is cleaved from the precursor. N-acetylproline is present on P3. The residue at position 14 (K14) is an N6,N6,N6-trimethyllysine. N123 and T173 together coordinate substrate. K175 acts as the Proton acceptor in catalysis. K177 is a binding site for substrate. K201, D203, and E204 together coordinate Mg(2+). K201 is subject to N6-carboxylysine. The active-site Proton acceptor is H294. Substrate-binding residues include R295, H327, and S379.

It belongs to the RuBisCO large chain family. Type I subfamily. As to quaternary structure, heterohexadecamer of 8 large chains and 8 small chains; disulfide-linked. The disulfide link is formed within the large subunit homodimers. It depends on Mg(2+) as a cofactor. Post-translationally, the disulfide bond which can form in the large chain dimeric partners within the hexadecamer appears to be associated with oxidative stress and protein turnover.

It is found in the plastid. The protein resides in the chloroplast. It carries out the reaction 2 (2R)-3-phosphoglycerate + 2 H(+) = D-ribulose 1,5-bisphosphate + CO2 + H2O. It catalyses the reaction D-ribulose 1,5-bisphosphate + O2 = 2-phosphoglycolate + (2R)-3-phosphoglycerate + 2 H(+). Its function is as follows. RuBisCO catalyzes two reactions: the carboxylation of D-ribulose 1,5-bisphosphate, the primary event in carbon dioxide fixation, as well as the oxidative fragmentation of the pentose substrate in the photorespiration process. Both reactions occur simultaneously and in competition at the same active site. The sequence is that of Ribulose bisphosphate carboxylase large chain from Dioscorea elephantipes (Elephant's foot yam).